The primary structure comprises 197 residues: Phosphoheptose isomerase (197 aa).

In terms of domain architecture, SIS spans methionine 34–glutamine 196. Asparagine 49–glycine 51 contacts substrate. Zn(2+) is bound by residues histidine 58 and glutamate 62. Substrate is bound by residues glutamate 62, asparagine 91 to aspartate 92, serine 117 to serine 119, serine 122, and glutamine 172. Residues glutamine 172 and histidine 180 each contribute to the Zn(2+) site.

It belongs to the SIS family. GmhA subfamily. In terms of assembly, homotetramer. The cofactor is Zn(2+).

Its subcellular location is the cytoplasm. It carries out the reaction 2 D-sedoheptulose 7-phosphate = D-glycero-alpha-D-manno-heptose 7-phosphate + D-glycero-beta-D-manno-heptose 7-phosphate. Its pathway is carbohydrate biosynthesis; D-glycero-D-manno-heptose 7-phosphate biosynthesis; D-glycero-alpha-D-manno-heptose 7-phosphate and D-glycero-beta-D-manno-heptose 7-phosphate from sedoheptulose 7-phosphate: step 1/1. Functionally, catalyzes the isomerization of sedoheptulose 7-phosphate in D-glycero-D-manno-heptose 7-phosphate. The sequence is that of Phosphoheptose isomerase from Shewanella baltica (strain OS223).